Consider the following 195-residue polypeptide: MTINTNNLTITISAASKKQYPENDWPEIALAGRSNVGKSSFINTLLNRKNFARTSGQPGKTQLLNFYNIDDQLHFVDVPGYGYARVSKKEREKWGKMIEEYLTTRENLKAVVSLVDIRHEPSEDDLMMYEFLKYYHIPVILVATKADKVPRGKWNKHESIIKKAMKFDSTDDFIIFSSTDKTGFEEAWEAILRYL.

In terms of domain architecture, EngB-type G spans 24–195 (DWPEIALAGR…EAWEAILRYL (172 aa)). GTP contacts are provided by residues 32-39 (GRSNVGKS), 59-63 (GKTQL), 77-80 (DVPG), 144-147 (TKAD), and 176-178 (FSS). Residues Ser-39 and Thr-61 each contribute to the Mg(2+) site.

Belongs to the TRAFAC class TrmE-Era-EngA-EngB-Septin-like GTPase superfamily. EngB GTPase family. The cofactor is Mg(2+).

Functionally, necessary for normal cell division and for the maintenance of normal septation. This Lactococcus lactis subsp. lactis (strain IL1403) (Streptococcus lactis) protein is Probable GTP-binding protein EngB.